The primary structure comprises 848 residues: Dolabradiene synthase KSL4, chloroplastic (848 aa).

The transit peptide at 1–64 (MASLSFASSH…SRMPRNVDTH (64 aa)) directs the protein to the chloroplast. Positions 148–168 (QRSDGSWGPDGGSGDHPSSPL) are disordered. The Mg(2+) site is built by Asp-597, Asp-601, Asn-742, Ser-746, and Glu-750. A DDXXD motif motif is present at residues 597–601 (DDLFD).

Belongs to the terpene synthase family. Requires Mg(2+) as cofactor.

The protein resides in the plastid. Its subcellular location is the chloroplast. The enzyme catalyses ent-copalyl diphosphate = dolabradiene + diphosphate. Functionally, involved in the production of antifungal dolabralexin phytoalexins in response to biotic and abiotic stresses. In response to fungal infection and in associtation with AN2, is involved in the production dolabradiene, a type of antifungal phytoalexin. Converts ent-copalyl disphosphate (ent-CPP) to dolabradiene. This chain is Dolabradiene synthase KSL4, chloroplastic, found in Zea mays (Maize).